We begin with the raw amino-acid sequence, 100 residues long: Proline-rich protein 15-like protein (100 aa).

Residues Tyr29 to Asn51 form a disordered region.

Belongs to the PRR15 family.

The chain is Proline-rich protein 15-like protein (Prr15l) from Mus musculus (Mouse).